The following is a 428-amino-acid chain: Cholecystokinin receptor type A (428 aa).

The Extracellular segment spans residues Met-1–Pro-41. 2 N-linked (GlcNAc...) asparagine glycosylation sites follow: Asn-10 and Asn-24. Cysteines 18 and 29 form a disulfide. A helical membrane pass occupies residues Ala-42 to Ile-67. The Cytoplasmic portion of the chain corresponds to Arg-68–Asn-77. The chain crosses the membrane as a helical span at residues Ile-78–Leu-104. At Lys-105–Lys-115 the chain is on the extracellular side. A disulfide bond links Cys-114 and Cys-196. Residues Thr-116–Leu-137 traverse the membrane as a helical segment. Residues Glu-138 to His-157 lie on the Cytoplasmic side of the membrane. The helical transmembrane segment at Ala-158 to Ile-178 threads the bilayer. The Extracellular segment spans residues Tyr-179 to His-210. A glycan (N-linked (GlcNAc...) asparagine) is linked at Asn-190. Residues Thr-211 to Leu-234 form a helical membrane-spanning segment. Over Glu-235–Arg-313 the chain is Cytoplasmic. Residues Ala-250–Cys-269 are disordered. Residues Met-314 to Ala-334 form a helical membrane-spanning segment. At Trp-335 to Gly-349 the chain is on the extracellular side. Residues Thr-350–Met-373 form a helical membrane-spanning segment. At Asn-374–Pro-428 the chain is on the cytoplasmic side. A lipid anchor (S-palmitoyl cysteine) is attached at Cys-387. The disordered stretch occupies residues Pro-393–Pro-428. Polar residues predominate over residues Thr-409–Ser-422.

This sequence belongs to the G-protein coupled receptor 1 family.

Its subcellular location is the cell membrane. Receptor for cholecystokinin. Mediates pancreatic growth and enzyme secretion, smooth muscle contraction of the gall bladder and stomach. Has a 1000-fold higher affinity for CCK rather than for gastrin. It modulates feeding and dopamine-induced behavior in the central and peripheral nervous system. This receptor mediates its action by association with G proteins that activate a phosphatidylinositol-calcium second messenger system. This Canis lupus familiaris (Dog) protein is Cholecystokinin receptor type A (CCKAR).